A 442-amino-acid chain; its full sequence is tRNA modification GTPase MnmE (442 aa).

(6S)-5-formyl-5,6,7,8-tetrahydrofolate contacts are provided by arginine 27, glutamate 84, and lysine 124. The TrmE-type G domain maps to 221–366; the sequence is GLHVVIVGAP…LLDALQAFAE (146 aa). Residues 231-236, 250-256, and 275-278 each bind GTP; these read NAGKSS, SEEAGTT, and DTAG. Positions 235 and 256 each coordinate Mg(2+). Position 442 (lysine 442) interacts with (6S)-5-formyl-5,6,7,8-tetrahydrofolate.

This sequence belongs to the TRAFAC class TrmE-Era-EngA-EngB-Septin-like GTPase superfamily. TrmE GTPase family. As to quaternary structure, homodimer. Heterotetramer of two MnmE and two MnmG subunits. K(+) serves as cofactor.

It is found in the cytoplasm. Functionally, exhibits a very high intrinsic GTPase hydrolysis rate. Involved in the addition of a carboxymethylaminomethyl (cmnm) group at the wobble position (U34) of certain tRNAs, forming tRNA-cmnm(5)s(2)U34. The protein is tRNA modification GTPase MnmE of Brucella ovis (strain ATCC 25840 / 63/290 / NCTC 10512).